A 578-amino-acid polypeptide reads, in one-letter code: MNDAVITLNGLEKRFPGMDKPAVAPLDCTIHAGYVTGLVGPDGAGKTTLMRMLAGLLKPDSGSATVIGFDPIKNDGALHAVLGYMPQKFGLYEDLTVMENLNLYADLRSVTGEARKQTFARLLEFTSLGPFTGRLAGKLSGGMKQKLGLACTLVGEPKVLLLDEPGVGVDPISRRELWQMVHELAGEGMLILWSTSYLDEAEQCRDVLLMNEGELLYQGEPKALTQTMAGRSFLMTSPHEGNRKLLQRALKLPQVSDGMIQGKSVRLILKKEATPDDIRHADGMPEININETTPRFEDAFIDLLGGAGTSESPLGAILHTVEGTPGETVIEAKELTKKFGDFAATDHVNFAVKRGEIFGLLGPNGAGKSTTFKMMCGLLVPTSGQALVLGMDLKESSGKARQHLGYMAQKFSLYGNLTVEQNLRFFSGVYGLRGRAQNEKISRMSEAFGLKSIASHATDELPLGFKQRLALACSLMHEPDILFLDEPTSGVDPLTRREFWLHINSMVEKGVTVMVTTHFMDEAEYCDRIGLVYRGKLIASGTPDDLKAQSANDEQPDPTMEQAFIQLIHDWDKEHSNE.

ABC transporter domains lie at 6-237 and 330-559; these read ITLN…LMTS and IEAK…PDPT. ATP is bound by residues 40–47 and 362–369; these read GPDGAGKT and GPNGAGKS.

It belongs to the ABC transporter superfamily. As to quaternary structure, the complex is probably composed of two ATP-binding proteins (YbhF) and two transmembrane proteins (YbhR and YbhS).

Part of the ABC transporter complex YbhFSR that could be involved in efflux of cefoperazone. Probably responsible for energy coupling to the transport system. In Escherichia coli (strain K12), this protein is Probable multidrug ABC transporter ATP-binding protein YbhF (ybhF).